The primary structure comprises 670 residues: Probable Na(+)/H(+) antiporter nhx-3 (670 aa).

Helical transmembrane passes span 41–61 (VYVITTWLLVASLAKILFNLM), 73–93 (LLIIVGLGLGYFLNQTTLSGV), 97–117 (SHAFFLYLLPPIIFDAGYFMP), 129–149 (LVFSVLGTLWNTFAIGGSLLI), 164–184 (EILVFSALISAVDPVAVIAIF), 192–212 (FLFINVFGEALFNDGVTVVLY), 235–255 (GLSFFVVALGGAAIGIIFAIA), and 268–288 (ILAPVFIFLLPYMAYLTAEMV). The N-linked (GlcNAc...) asparagine glycan is linked to Asn-310. 4 helical membrane-spanning segments follow: residues 325-345 (MLAQCSETVIFMFLGLSTLTS), 351-371 (FIFIGATLVFCLIYRAIGIIV), 390-410 (FILSYGGLRGAIAYGLVVSIP), and 418-438 (MFITTTICVIYFTVFLQGITI). The disordered stretch occupies residues 648-670 (GDLKGHCGTSRKPKHSMFELRHV).

It belongs to the monovalent cation:proton antiporter 1 (CPA1) transporter (TC 2.A.36) family. Post-translationally, phosphorylated. Expressed in hypodermal cells of the main body syncytium, ut1 cells of the vulva and the spermathecal junction cell.

It localises to the endomembrane system. Functionally, plays a role in epithelial membrane transport processes. The chain is Probable Na(+)/H(+) antiporter nhx-3 (nhx-3) from Caenorhabditis elegans.